A 233-amino-acid polypeptide reads, in one-letter code: MNTPAQLSLPLYLPDDETFASFWPGDNSSLLAALQNVLRQEHSGYIYLWAREGAGRSHLLHAACAELSQRGDAVGYVPLDKRTWFVPEVLDGMEHLSLVCIDNIECIAGDELWEMAIFDLYNRILESGKTRLLITGDRPPRQLNLGLPDLASRLDWGQIYKLQPLSDEDKLQALQLRARLRGFELPEDVGRFLLKRLDREMRTLFMTLDQLDRASITAQRKLTIPFVKEILKL.

The protein belongs to the DnaA family. HdA subfamily. As to quaternary structure, the active form seems to be an ADP-bound monomer. Forms the RIDA complex (regulatory inactivation of DnaA) of ATP-DnaA, ADP-Hda and the DNA-loaded beta sliding clamp (dnaN).

Functionally, mediates the interaction of DNA replication initiator protein DnaA with DNA polymerase subunit beta sliding clamp (dnaN). Stimulates hydrolysis of ATP-DnaA to ADP-DnaA, rendering DnaA inactive for reinitiation, a process called regulatory inhibition of DnaA or RIDA. This Shigella boydii serotype 4 (strain Sb227) protein is DnaA regulatory inactivator Hda.